The following is a 209-amino-acid chain: FAS-associated death domain protein (209 aa).

Positions 3–81 (PFLVLLHSVS…RKDLLLRLDD (79 aa)) constitute a DED domain. Residues 97 to 181 (LRAAMEIICD…VVADLIEEDQ (85 aa)) enclose the Death domain. The segment covering 187 to 200 (QSGSANPGSFTAWD) has biased composition (polar residues). Positions 187-209 (QSGSANPGSFTAWDSGSAAPGAS) are disordered.

In terms of assembly, can self-associate. Component of the AIM2 PANoptosome complex, a multiprotein complex that drives inflammatory cell death (PANoptosis). Component of the death-induced signaling complex (DISC) composed of cell surface receptor FAS/CD95 or TNFRSF1A, adapter protein FADD and the CASP8 protease; recruitment of CASP8 to the complex is required for processing of CASP8 into the p18 and p10 subunits. Interacts (via death domain) with FAS (via death domain). Interacts directly (via DED domain) with NOL3 (via CARD domain); inhibits death-inducing signaling complex (DISC) assembly by inhibiting the increase in FAS-FADD binding induced by FAS activation. Interacts with CFLAR, PEA15 and MBD4. When phosphorylated, part of a complex containing HIPK3 and FAS. May interact with MAVS/IPS1. Interacts with MOCV v-CFLAR protein and PIDD1. Interacts with RIPK1 and TRADD. Interacts with stimulated TNFRSF10B. Interacts with DDX24. Post-translationally, phosphorylated.

It localises to the cytoplasm. Functionally, apoptotic adapter molecule that recruits caspases CASP8 or CASP10 to the activated FAS/CD95 or TNFRSF1A/TNFR-1 receptors. The resulting aggregate called the death-inducing signaling complex (DISC) performs CASP8 proteolytic activation. Active CASP8 initiates the subsequent cascade of caspases mediating apoptosis. Involved in interferon-mediated antiviral immune response, playing a role in the positive regulation of interferon signaling. This is FAS-associated death domain protein from Bos taurus (Bovine).